The chain runs to 247 residues: Carbonic anhydrase (247 aa).

The N-terminal stretch at 1 to 34 (MMFNKQIFTILILSLSLALAGSGCISEGAEDNVA) is a signal peptide. 93–95 (RSD) is a binding site for substrate. Glu96 functions as the Proton donor/acceptor in the catalytic mechanism. Substrate is bound at residue 109 to 110 (QD). His115 lines the Zn(2+) pocket. Residue Glu118 is part of the active site. His151 and His156 together coordinate Zn(2+). Asn236 serves as a coordination point for substrate.

Belongs to the gamma-class carbonic anhydrase family. As to quaternary structure, homotrimer. Zn(2+) is required as a cofactor.

It is found in the secreted. It catalyses the reaction hydrogencarbonate + H(+) = CO2 + H2O. Its function is as follows. Reversible hydration of carbon dioxide. Important for growth on acetate. As a probably extracellular enzyme, it may support a H(+)/CH(3)COO(-) symport mechanism and/or conversion of CO(2) to HCO(3)(-), removing excess CO(2) produced by growth on acetate. The sequence is that of Carbonic anhydrase from Methanosarcina thermophila (strain ATCC 43570 / DSM 1825 / OCM 12 / VKM B-1830 / TM-1).